Consider the following 206-residue polypeptide: MARYLGPKLKLSRREGTDLFLKSGFRSIDSKCKLEHPPGQHGVRKPRLSDYAIQLREKQKVRRLYGVLERQFRIYYKKASRSKGNTGENLLQLLERRLDNVVYRMGFGCTRSESRQLISHKSIKVNNNIVNIASYQISPNDRISVRDKSKNQSRIKAALELTEQREKLMWIEVNVTKMEGIFKRFPERSDLSAEINEHLIVELYSK.

In terms of domain architecture, S4 RNA-binding spans 96-156 (RRLDNVVYRM…DKSKNQSRIK (61 aa)).

It belongs to the universal ribosomal protein uS4 family. As to quaternary structure, part of the 30S ribosomal subunit. Contacts protein S5. The interaction surface between S4 and S5 is involved in control of translational fidelity.

Functionally, one of the primary rRNA binding proteins, it binds directly to 16S rRNA where it nucleates assembly of the body of the 30S subunit. In terms of biological role, with S5 and S12 plays an important role in translational accuracy. The protein is Small ribosomal subunit protein uS4 of Buchnera aphidicola subsp. Schizaphis graminum (strain Sg).